We begin with the raw amino-acid sequence, 429 residues long: ETS domain-containing protein Elk-1 (429 aa).

The segment at residues 5 to 86 (VTLWQFLLQL…SGQKFVYKFV (82 aa)) is a DNA-binding region (ETS). Disordered regions lie at residues 119 to 146 (HAGPGDTATGKPGTPKGAGMTGQGGLAR), 165 to 204 (SLQPQPQPPIPPRPASVLPNTTPAGVPAPASGSRSTSPNP), and 227 to 253 (APNQKSEELSLDPSFGHPQPPEVKVEG). Residues 169-178 (QPQPPIPPRP) are compositionally biased toward pro residues. Residues Lys-231, Lys-250, and Lys-255 each participate in a glycyl lysine isopeptide (Lys-Gly) (interchain with G-Cter in SUMO) cross-link. Polar residues predominate over residues 302–312 (STSTTEITQPQ). The interval 302-354 (STSTTEITQPQKGRKPRDLELPLSPSLLGGQGPERTPGSGTSSGLQAPGPALT) is disordered. At Ser-325 the chain carries Phosphoserine; by MAPK1. Residues Thr-337, Thr-354, Thr-364, and Thr-369 each carry the phosphothreonine; by MAPK1 modification. The interval 350–400 (GPALTPSLLPTHTLTPVLLTPSSLPPSIHFWSTLSPIAPRSPAKLSFQFPS) is sufficient for interaction with MAD2L2. O-linked (GlcNAc) threonine glycosylation is present at Thr-382. Residue Ser-384 is modified to Phosphoserine; by MAPK1 and MAPK8. Ser-390 carries the post-translational modification Phosphoserine; by MAPK1. Residue Thr-418 is modified to Phosphothreonine; by MAPK1. Position 423 is a phosphoserine; by MAPK1 (Ser-423).

It belongs to the ETS family. Interacts in its sumoylated form with PIAS2/PIASX which enhances its transcriptional activator activity. Interacts with MAD2L2; the interaction is direct and promotes phosphorylation by the kinases MAPK8 and/or MAPK9. Interacts with POU1F1. Sumoylation represses transcriptional activator activity as it results in recruitment of HDAC2 to target gene promoters which leads to decreased histone acetylation and reduced transactivator activity. It also regulates nuclear retention. In terms of processing, on mitogenic stimulation, phosphorylated on C-terminal serine and threonine residues by MAPK1 but also MAPK8 and/or MAPK9. Phosphorylation leads to loss of sumoylation and restores transcriptional activator activity. Phosphorylated and activated by CaMK4, MAPK11, MAPK12 and MAPK14. Upon bFGF stimulus, phosphorylated by PAK1. Phosphorylated by PRP4K at Thr-418; phosphorylation activation ELK1 transcriptional activity. In terms of tissue distribution, predominantly expressed in the brain, and to a lesser extent in the heart, liver and muscle.

It is found in the nucleus. In terms of biological role, transcription factor that binds to purine-rich DNA sequences. Forms a ternary complex with SRF and the ETS and SRF motifs of the serum response element (SRE) on the promoter region of immediate early genes such as FOS and IER2. Induces target gene transcription upon JNK and MAPK-signaling pathways stimulation. The chain is ETS domain-containing protein Elk-1 from Mus musculus (Mouse).